Reading from the N-terminus, the 489-residue chain is Rhamnulokinase (489 aa).

13–17 (ASSGR) contacts ATP. Cysteine 68 and cysteine 222 are oxidised to a cystine. Substrate-binding positions include glycine 83 and 236 to 238 (HDT). Catalysis depends on aspartate 237, which acts as the Proton acceptor. Threonine 259 is an ATP binding site. A substrate-binding site is contributed by asparagine 296. Residue glutamine 304 participates in ATP binding. Cysteine 353 and cysteine 370 are oxidised to a cystine. ATP is bound at residue glycine 402. Cysteine 413 and cysteine 417 are oxidised to a cystine.

This sequence belongs to the rhamnulokinase family. Mg(2+) is required as a cofactor.

It catalyses the reaction L-rhamnulose + ATP = L-rhamnulose 1-phosphate + ADP + H(+). Its pathway is carbohydrate degradation; L-rhamnose degradation; glycerone phosphate from L-rhamnose: step 2/3. Involved in the catabolism of L-rhamnose (6-deoxy-L-mannose). Catalyzes the transfer of the gamma-phosphate group from ATP to the 1-hydroxyl group of L-rhamnulose to yield L-rhamnulose 1-phosphate. The protein is Rhamnulokinase of Salmonella typhimurium (strain LT2 / SGSC1412 / ATCC 700720).